The primary structure comprises 53 residues: ATRPWKCCDRAICTKSFPPMCRCMDMVEQCAATCKKCGPATSDSSRRVCEDXY.

4 disulfide bridges follow: C8/C23, C13/C21, C30/C37, and C34/C49.

This sequence belongs to the Bowman-Birk serine protease inhibitor family.

The sequence is that of Bowman-Birk type proteinase inhibitor II-4 from Triticum aestivum (Wheat).